The chain runs to 222 residues: Cytidylate kinase (222 aa).

ATP is bound at residue 11 to 19; sequence GPTASGKGT.

It belongs to the cytidylate kinase family. Type 1 subfamily.

It localises to the cytoplasm. The enzyme catalyses CMP + ATP = CDP + ADP. The catalysed reaction is dCMP + ATP = dCDP + ADP. This chain is Cytidylate kinase, found in Cupriavidus necator (strain ATCC 17699 / DSM 428 / KCTC 22496 / NCIMB 10442 / H16 / Stanier 337) (Ralstonia eutropha).